A 215-amino-acid chain; its full sequence is Protein C' (215 aa).

The segment at 12–34 (MPSFLKKILKLRGRRQEDESRSR) is disordered. The involved in self-degradation and in host STAT1 degradation stretch occupies residues 15–22 (FLKKILKL).

The protein belongs to the respirovirus protein C family. The different isoforms interact (via C-terminus) with unphosphorylated and phosphorylated human STAT1 (via N-terminus), favoring the formation of parallel STAT1 homodimers. The different isoforms do not interact with host STAT2. C protein interacts with L protein; this interaction has an inhibitory effect on viral transcription and replication. Protein Y2 is produced not only by alternative initiation, but also by proteolytic cleavage of C'. Only alternative initiation is detected in vitro, whereas in vivo cleavage seems to be predominant.

It is found in the host cytoplasm. In terms of biological role, the different products prevent the establishment of cellular antiviral state by blocking the interferon-alpha/beta (IFN-alpha/beta) and IFN-gamma signaling pathways. They inhibit IFN-alpha/beta induced tyrosine phosphorylation of STAT1 and STAT2. Blocking the IFN-alpha/beta pathway requires binding to STAT1 in the cytoplasm. They inhibit IFN-gamma induced serine phosphorylation of STAT1. Block the IFN-gamma pathway by binding to and stabilizing the parallel form of the STAT1 dimer, further inducing high-molecular-weight complex formation and inhibition of transcription by IFN-gamma. May also have a role in preventing the cell to enter apoptosis. Modulate regulation of viral transcription and replication. Overexpression inhibits the viral RNA polymerase. The absence of all C', C and Y2 proteins leads to viral delayed growth. Plays an important role in virion particles release. Modulates virion shape. This Cavia cutleri (Guinea pig) protein is Protein C' (P/V/C).